The chain runs to 338 residues: Phenylalanine--tRNA ligase alpha subunit (338 aa).

Mg(2+) is bound at residue Glu252.

The protein belongs to the class-II aminoacyl-tRNA synthetase family. Phe-tRNA synthetase alpha subunit type 1 subfamily. As to quaternary structure, tetramer of two alpha and two beta subunits. Mg(2+) serves as cofactor.

It localises to the cytoplasm. It catalyses the reaction tRNA(Phe) + L-phenylalanine + ATP = L-phenylalanyl-tRNA(Phe) + AMP + diphosphate + H(+). The protein is Phenylalanine--tRNA ligase alpha subunit of Pseudomonas fluorescens (strain Pf0-1).